Consider the following 149-residue polypeptide: Ribosome-binding factor A (149 aa).

Belongs to the RbfA family. In terms of assembly, monomer. Binds 30S ribosomal subunits, but not 50S ribosomal subunits or 70S ribosomes.

It is found in the cytoplasm. Its function is as follows. One of several proteins that assist in the late maturation steps of the functional core of the 30S ribosomal subunit. Associates with free 30S ribosomal subunits (but not with 30S subunits that are part of 70S ribosomes or polysomes). Required for efficient processing of 16S rRNA. May interact with the 5'-terminal helix region of 16S rRNA. This is Ribosome-binding factor A from Caulobacter vibrioides (strain ATCC 19089 / CIP 103742 / CB 15) (Caulobacter crescentus).